Reading from the N-terminus, the 43-residue chain is FTCDVLGFEIAGTKLNSAACGAHCLALGRRGGYCNSKSVCVCR.

3 disulfides stabilise this stretch: Cys3–Cys34, Cys20–Cys40, and Cys24–Cys42.

The protein belongs to the invertebrate defensin family. Type 1 subfamily.

It is found in the secreted. Its function is as follows. Involved in anti Gram-positive activity of immune hemolymph of Z.atratus. The sequence is that of Defensin, isoforms B and C from Zophobas atratus (Giant mealworm beetle).